Here is a 186-residue protein sequence, read N- to C-terminus: Large ribosomal subunit protein uL5 (186 aa).

Belongs to the universal ribosomal protein uL5 family. In terms of assembly, part of the 50S ribosomal subunit; contacts the 5S rRNA and probably tRNA. Forms a bridge to the 30S subunit in the 70S ribosome.

Its function is as follows. This is one of the proteins that bind and probably mediate the attachment of the 5S RNA into the large ribosomal subunit, where it forms part of the central protuberance. In the 70S ribosome it contacts protein S13 of the 30S subunit (bridge B1b), connecting the 2 subunits; this bridge is implicated in subunit movement. May contact the P site tRNA; the 5S rRNA and some of its associated proteins might help stabilize positioning of ribosome-bound tRNAs. The chain is Large ribosomal subunit protein uL5 from Pyrococcus furiosus (strain ATCC 43587 / DSM 3638 / JCM 8422 / Vc1).